Here is a 299-residue protein sequence, read N- to C-terminus: Probable lipid kinase YegS (299 aa).

A DAGKc domain is found at 2-133; the sequence is ANFPDSLLIL…IDMARVNDKT (132 aa). ATP contacts are provided by residues T40, 66-72, and T95; that span reads GDGTINE. 3 residues coordinate Mg(2+): L215, D218, and L220. The Proton acceptor role is filled by E271.

The protein belongs to the diacylglycerol/lipid kinase family. YegS lipid kinase subfamily. It depends on Mg(2+) as a cofactor. The cofactor is Ca(2+).

The protein localises to the cytoplasm. Probably phosphorylates lipids; the in vivo substrate is unknown. This Salmonella arizonae (strain ATCC BAA-731 / CDC346-86 / RSK2980) protein is Probable lipid kinase YegS.